The sequence spans 215 residues: Pyrrolidone-carboxylate peptidase (215 aa).

Active-site residues include glutamate 81, cysteine 144, and histidine 168.

This sequence belongs to the peptidase C15 family. In terms of assembly, homotetramer.

It localises to the cytoplasm. It carries out the reaction Release of an N-terminal pyroglutamyl group from a polypeptide, the second amino acid generally not being Pro.. Removes 5-oxoproline from various penultimate amino acid residues except L-proline. The chain is Pyrrolidone-carboxylate peptidase from Bacillus velezensis (strain DSM 23117 / BGSC 10A6 / LMG 26770 / FZB42) (Bacillus amyloliquefaciens subsp. plantarum).